A 71-amino-acid polypeptide reads, in one-letter code: Virion membrane protein A13 homolog (71 aa).

A helical transmembrane segment spans residues 1–21 (MGIIDTFVITAVTVIIFCLLI). The Virion surface portion of the chain corresponds to 22–70 (YAAYKRYKCIPSPDDRDKVLKSTLNDDTLFNQTLTPDQVKALHRLVTSS).

The protein belongs to the chordopoxvirinae A13 family.

It is found in the virion membrane. Functionally, essential for the encapsidation of DNA into immature virions (IV) and the subsequent maturation of IV into mature virions (MV). This Vertebrata (FPV) protein is Virion membrane protein A13 homolog.